Reading from the N-terminus, the 444-residue chain is MAAAPSAGGVGEGSSSSAAAAAAAAAATIGPHVVDEEAMWQMNLGEAMEAGPYPERIGEPDCSYYMRTGLCRFGMTCKFNHPADRKMAVAAARMKGEYPQRIGQPECQYYLKTGTCKFGATCKFHHPREKAAIATRVQLNALGYPLRPNEKECAYYLRTGQCKFGSTCKFHHPQPSNTMVAVRGSVYSPGQSVTSPSQHTYPGAVTNWPLSRSASFIASPRWPGHSSYAQVIVPPGLVQVPGWNPYAAQIGSSSSDDQQRTAGGAQYYTGSRHSETPNMGDQGMFSSYQAGSVPLGLYTVQRESIFPERPDQPECQFYMKTGDCKFGAVCKFHHPKERIIPTPNCALSSLGLPLRPGEPICTFYSRYGICKFGPNCKFDHPMGTVMYGLATSPTGDVSARRMLAPVPAHSEVSPDNVSGRSRRITHSDSQQIPSGERGTEREAS.

C3H1-type zinc fingers lie at residues 56–84 (RIGE…HPAD), 101–129 (RIGQ…HPRE), and 147–175 (RPNE…HPQP). The tract at residues 251–276 (GSSSSDDQQRTAGGAQYYTGSRHSET) is disordered. 2 consecutive C3H1-type zinc fingers follow at residues 309–337 (RPDQ…HPKE) and 355–383 (RPGE…HPMG). The interval 405 to 444 (PVPAHSEVSPDNVSGRSRRITHSDSQQIPSGERGTEREAS) is disordered.

This chain is Zinc finger CCCH domain-containing protein 63, found in Oryza sativa subsp. japonica (Rice).